A 453-amino-acid chain; its full sequence is DNA repair protein RadA (453 aa).

Residues 10–27 (CQECGYQSPKYLGRCPNC) form a C4-type zinc finger. Residue 95–102 (GDPGIGKS) coordinates ATP. Positions 251–255 (KNRFG) match the RadA KNRFG motif motif. The tract at residues 350 to 453 (DAYLKSAGGV…VGQVLKAVFS (104 aa)) is lon-protease-like.

The protein belongs to the RecA family. RadA subfamily.

DNA-dependent ATPase involved in processing of recombination intermediates, plays a role in repairing DNA breaks. Stimulates the branch migration of RecA-mediated strand transfer reactions, allowing the 3' invading strand to extend heteroduplex DNA faster. Binds ssDNA in the presence of ADP but not other nucleotides, has ATPase activity that is stimulated by ssDNA and various branched DNA structures, but inhibited by SSB. Does not have RecA's homology-searching function. The chain is DNA repair protein RadA from Streptococcus pyogenes serotype M3 (strain ATCC BAA-595 / MGAS315).